The sequence spans 438 residues: Transmembrane protein 184C (438 aa).

The next 7 membrane-spanning stretches (helical) occupy residues 17–37 (LVAV…VWEL), 48–68 (AWFI…WVIL), 86–106 (ILWM…YPGI), 179–199 (YTVV…LGIY), 212–232 (YLVI…LLFY), 254–274 (VVFV…VGVI), and 287–307 (AVAT…AAIA). Residues 358–438 (PRKKLFPEDQ…KEPSDKSVDS (81 aa)) form a disordered region. 2 stretches are compositionally biased toward low complexity: residues 374 to 390 (SLLS…ASSM) and 404 to 413 (TVTPQTTPTT). Ser-422 carries the phosphoserine modification. Positions 425-438 (IGEKKEPSDKSVDS) are enriched in basic and acidic residues.

The protein belongs to the TMEM184 family.

The protein localises to the membrane. Possible tumor suppressor which may play a role in cell growth. The polypeptide is Transmembrane protein 184C (TMEM184C) (Pongo abelii (Sumatran orangutan)).